Here is a 131-residue protein sequence, read N- to C-terminus: Small ribosomal subunit protein eS24 (131 aa).

M1 carries the N-acetylmethionine modification. The residue at position 9 (T9) is a Phosphothreonine. K37 participates in a covalent cross-link: Glycyl lysine isopeptide (Lys-Gly) (interchain with G-Cter in SUMO2). The span at 90–100 (RLARHGLYEKK) shows a compositional bias: basic and acidic residues. Residues 90 to 131 (RLARHGLYEKKKTSRKQRKERKNRMKKVRGTAKANVGAGKKK) form a disordered region. Residues 101–119 (KTSRKQRKERKNRMKKVRG) are compositionally biased toward basic residues.

Belongs to the eukaryotic ribosomal protein eS24 family. As to quaternary structure, component of the small ribosomal subunit. Part of the small subunit (SSU) processome, composed of more than 70 proteins and the RNA chaperone small nucleolar RNA (snoRNA) U3.

The protein resides in the cytoplasm. It is found in the nucleus. It localises to the nucleolus. Component of the small ribosomal subunit. The ribosome is a large ribonucleoprotein complex responsible for the synthesis of proteins in the cell. Required for processing of pre-rRNA and maturation of 40S ribosomal subunits. Part of the small subunit (SSU) processome, first precursor of the small eukaryotic ribosomal subunit. During the assembly of the SSU processome in the nucleolus, many ribosome biogenesis factors, an RNA chaperone and ribosomal proteins associate with the nascent pre-rRNA and work in concert to generate RNA folding, modifications, rearrangements and cleavage as well as targeted degradation of pre-ribosomal RNA by the RNA exosome. The protein is Small ribosomal subunit protein eS24 (RPS24) of Pongo abelii (Sumatran orangutan).